The following is a 343-amino-acid chain: Ribosomal RNA small subunit methyltransferase C (343 aa).

It belongs to the methyltransferase superfamily. RsmC family. Monomer.

It is found in the cytoplasm. It carries out the reaction guanosine(1207) in 16S rRNA + S-adenosyl-L-methionine = N(2)-methylguanosine(1207) in 16S rRNA + S-adenosyl-L-homocysteine + H(+). In terms of biological role, specifically methylates the guanine in position 1207 of 16S rRNA in the 30S particle. The polypeptide is Ribosomal RNA small subunit methyltransferase C (Escherichia coli (strain SMS-3-5 / SECEC)).